Here is a 282-residue protein sequence, read N- to C-terminus: 4-hydroxy-3-methylbut-2-enyl diphosphate reductase (282 aa).

Cys-12 lines the [4Fe-4S] cluster pocket. 2 residues coordinate (2E)-4-hydroxy-3-methylbut-2-enyl diphosphate: His-40 and His-72. Dimethylallyl diphosphate contacts are provided by His-40 and His-72. Isopentenyl diphosphate-binding residues include His-40 and His-72. Residue Cys-94 coordinates [4Fe-4S] cluster. (2E)-4-hydroxy-3-methylbut-2-enyl diphosphate is bound at residue His-122. His-122 contacts dimethylallyl diphosphate. His-122 is an isopentenyl diphosphate binding site. The active-site Proton donor is Glu-124. Thr-160 provides a ligand contact to (2E)-4-hydroxy-3-methylbut-2-enyl diphosphate. Cys-188 contributes to the [4Fe-4S] cluster binding site. Positions 216, 218, and 260 each coordinate (2E)-4-hydroxy-3-methylbut-2-enyl diphosphate. Positions 216, 218, and 260 each coordinate dimethylallyl diphosphate. Isopentenyl diphosphate-binding residues include Ser-216, Asn-218, and Ser-260.

This sequence belongs to the IspH family. [4Fe-4S] cluster serves as cofactor.

It catalyses the reaction isopentenyl diphosphate + 2 oxidized [2Fe-2S]-[ferredoxin] + H2O = (2E)-4-hydroxy-3-methylbut-2-enyl diphosphate + 2 reduced [2Fe-2S]-[ferredoxin] + 2 H(+). The enzyme catalyses dimethylallyl diphosphate + 2 oxidized [2Fe-2S]-[ferredoxin] + H2O = (2E)-4-hydroxy-3-methylbut-2-enyl diphosphate + 2 reduced [2Fe-2S]-[ferredoxin] + 2 H(+). The protein operates within isoprenoid biosynthesis; dimethylallyl diphosphate biosynthesis; dimethylallyl diphosphate from (2E)-4-hydroxy-3-methylbutenyl diphosphate: step 1/1. It functions in the pathway isoprenoid biosynthesis; isopentenyl diphosphate biosynthesis via DXP pathway; isopentenyl diphosphate from 1-deoxy-D-xylulose 5-phosphate: step 6/6. Catalyzes the conversion of 1-hydroxy-2-methyl-2-(E)-butenyl 4-diphosphate (HMBPP) into a mixture of isopentenyl diphosphate (IPP) and dimethylallyl diphosphate (DMAPP). Acts in the terminal step of the DOXP/MEP pathway for isoprenoid precursor biosynthesis. The sequence is that of 4-hydroxy-3-methylbut-2-enyl diphosphate reductase from Geotalea daltonii (strain DSM 22248 / JCM 15807 / FRC-32) (Geobacter daltonii).